Here is a 200-residue protein sequence, read N- to C-terminus: MISSIYIFKILLSYLGVEYEINQLSEINQEFTNKLESYNQFIKHTQKDEDYLLGQSAVISRYISNNHNFSGKSLQESARVDDIVESVLEIIEEYVLPIINSNIINEEITKLLCTHFNDFENQLSKSTFSAGDSTTLADLYLFILYDITLRYLENHGHLAHHFNEKYPHLERLKLHFLSNKSVSEFINSNNINSQSSQLII.

The GST N-terminal domain maps to Met-1–Gly-71. The GST C-terminal domain occupies Ser-73 to Ser-195.

The protein belongs to the GST superfamily.

This chain is Glutathione S-transferase domain-containing protein DDB_G0273153/DDB_G0273923, found in Dictyostelium discoideum (Social amoeba).